Reading from the N-terminus, the 239-residue chain is Probable transcriptional regulatory protein lin0388 (239 aa).

It belongs to the TACO1 family. YeeN subfamily.

The protein localises to the cytoplasm. This chain is Probable transcriptional regulatory protein lin0388, found in Listeria innocua serovar 6a (strain ATCC BAA-680 / CLIP 11262).